We begin with the raw amino-acid sequence, 157 residues long: MTAASSSAPTLGIIRLEHAKGLDLPAYETAGSAGMDLRAAVAEDRQIVLLPGRRTLVPTGLILEIPQGYEVQIRPRSGLAFKNGITCLNTPGTIDSDYRGEVKVLLINLGDDDFRIERGMRIAQAVFAPVIQPKIEERAKISETARGAGGFGSTGTA.

Substrate contacts are provided by residues 76–78 (RSG), N89, 93–95 (TID), and K103.

Belongs to the dUTPase family. The cofactor is Mg(2+).

The enzyme catalyses dUTP + H2O = dUMP + diphosphate + H(+). It functions in the pathway pyrimidine metabolism; dUMP biosynthesis; dUMP from dCTP (dUTP route): step 2/2. Functionally, this enzyme is involved in nucleotide metabolism: it produces dUMP, the immediate precursor of thymidine nucleotides and it decreases the intracellular concentration of dUTP so that uracil cannot be incorporated into DNA. The polypeptide is Deoxyuridine 5'-triphosphate nucleotidohydrolase (Brucella abortus (strain 2308)).